The following is a 344-amino-acid chain: uncharacterized protein (344 aa).

Helical transmembrane passes span 53 to 73, 84 to 104, 153 to 173, 189 to 209, and 275 to 295; these read FVVG…VSVW, WPIL…GYNI, IYPL…LYLL, FGAW…LEML, and IASE…VGVF.

The protein belongs to the steroid 5-alpha reductase family.

Its subcellular location is the endoplasmic reticulum membrane. This is an uncharacterized protein from Schizosaccharomyces pombe (strain 972 / ATCC 24843) (Fission yeast).